The sequence spans 503 residues: Probable cytosol aminopeptidase (503 aa).

Positions 270 and 275 each coordinate Mn(2+). Lys282 is an active-site residue. Positions 293, 352, and 354 each coordinate Mn(2+). The active site involves Arg356.

This sequence belongs to the peptidase M17 family. Mn(2+) is required as a cofactor.

The protein resides in the cytoplasm. It carries out the reaction Release of an N-terminal amino acid, Xaa-|-Yaa-, in which Xaa is preferably Leu, but may be other amino acids including Pro although not Arg or Lys, and Yaa may be Pro. Amino acid amides and methyl esters are also readily hydrolyzed, but rates on arylamides are exceedingly low.. It catalyses the reaction Release of an N-terminal amino acid, preferentially leucine, but not glutamic or aspartic acids.. Its function is as follows. Presumably involved in the processing and regular turnover of intracellular proteins. Catalyzes the removal of unsubstituted N-terminal amino acids from various peptides. This Serratia proteamaculans (strain 568) protein is Probable cytosol aminopeptidase.